A 564-amino-acid polypeptide reads, in one-letter code: Threonine--tRNA ligase (564 aa).

Residues 167 to 464 (DHRAIGKRLE…LLEKTHGNLP (298 aa)) form a catalytic region. C260, H311, and H441 together coordinate Zn(2+).

Belongs to the class-II aminoacyl-tRNA synthetase family. As to quaternary structure, homodimer. The cofactor is Zn(2+).

The protein localises to the cytoplasm. It carries out the reaction tRNA(Thr) + L-threonine + ATP = L-threonyl-tRNA(Thr) + AMP + diphosphate + H(+). Its function is as follows. Catalyzes the attachment of threonine to tRNA(Thr) in a two-step reaction: L-threonine is first activated by ATP to form Thr-AMP and then transferred to the acceptor end of tRNA(Thr). Also edits incorrectly charged L-seryl-tRNA(Thr). The sequence is that of Threonine--tRNA ligase from Mycoplasma pneumoniae (strain ATCC 29342 / M129 / Subtype 1) (Mycoplasmoides pneumoniae).